Reading from the N-terminus, the 139-residue chain is Acidic phospholipase A2 DE-I (139 aa).

The N-terminal stretch at 1 to 16 (MRTLWIMAVLLLGVEG) is a signal peptide. Cystine bridges form between Cys-42/Cys-132, Cys-44/Cys-60, Cys-59/Cys-111, Cys-65/Cys-139, Cys-66/Cys-104, Cys-73/Cys-97, and Cys-91/Cys-102. Ca(2+) is bound by residues Tyr-43, Gly-45, and Gly-47. His-63 is a catalytic residue. Position 64 (Asp-64) interacts with Ca(2+). The active site involves Asp-105.

Ca(2+) serves as cofactor. Expressed by the venom gland.

It is found in the secreted. It carries out the reaction a 1,2-diacyl-sn-glycero-3-phosphocholine + H2O = a 1-acyl-sn-glycero-3-phosphocholine + a fatty acid + H(+). Snake venom phospholipase A2 (PLA2) that inhibits the ADP- and collagen-induced human platelet aggregation. Exhibits high hydrolytic activities and preferred the anionic micelles to the zwitterionic micelles. PLA2 catalyzes the calcium-dependent hydrolysis of the 2-acyl groups in 3-sn-phosphoglycerides. In Ovophis okinavensis (Ryukyu Island pit viper), this protein is Acidic phospholipase A2 DE-I.